We begin with the raw amino-acid sequence, 186 residues long: MLLYICLVNLLLPLSVGAASGAALGVIAKVGVDAALQQIDDVWKGKTVRYWKCAVENRSSKTLYALGTTQESGSMTTVFADIPPKSTGVFVWEKSRGAAKGAVGVVHYKYGNKVLNIMASIPYDWNLYKAWANVHLSDHKESFSDLYKGKNGAKYPTRAGNWGEVDGTKFFLTEKSHAEFKVIFSG.

The signal sequence occupies residues 1–18 (MLLYICLVNLLLPLSVGA). Residues 29–48 (KVGVDAALQQIDDVWKGKTV) form an N-terminal region region. The Cell attachment site, crucial for protein stability signature appears at 158 to 160 (RAG).

Belongs to the actinoporin family. HALT subfamily. As to quaternary structure, octamer or nonamer in membranes. Monomer in the soluble state. In vitro, interacts with folate receptor alpha (of target organism). Expressed female germline during oogenesis.

The protein localises to the nematocyst. The protein resides in the secreted. It localises to the target cell membrane. In terms of biological role, pore-forming protein that forms hydrophilic pores and causes cytolysis. Compared to equinatoxin-2 (AC P61914), it reveals lower cytolysis activity (5-12-fold difference, tested on erythrocytes), a larger pore size (probably 2-3 nm) and different affinity to membrane lipids (100-fold lower affinity to sphingomyelin). Binds to sulfatides (SFT) as well as to the two sphingolipids, lysophosphatidic acid (LPA) and sphingosine-1-phosphate (S1P). It seems to bind more strongly to LPA than to S1P and SFT. Shows cytolytic activity on HeLa cells, with a different potency than its paralogs (from most potent to less potent: HALT-4&gt;HALT-6~HALT-1&gt;HALT-3&gt;HALT-7&gt;HALT-2). Pore formation is a multi-step process that involves specific recognition of membrane lipid by a protein aromatic residues rich region, firm binding to the membrane (mainly driven by hydrophobic interactions) accompanied by the transfer of the N-terminal region to the lipid-water interface and finally pore formation after oligomerization of monomers. In vitro, binds to the folate receptor alpha (FOLR1), a GPI-anchored membrane protein that plays a major role in the uptake of folate/folic acid into cells via endocytosis, suggesting a possible involvement of this receptor in the mechanism of HALT-1-induced cell lysis. In vivo, does not cause visible paralysis in larvae of the blowfly Sarcophaga faculata, the most common arthropod prey of Hydra. The protein is Hydra actinoporin-like toxin 1 of Hydra vulgaris (Hydra).